We begin with the raw amino-acid sequence, 443 residues long: D-serine dehydratase (443 aa).

Lys-118 bears the N6-(pyridoxal phosphate)lysine mark.

Belongs to the serine/threonine dehydratase family. DsdA subfamily. In terms of assembly, monomer. It depends on pyridoxal 5'-phosphate as a cofactor.

The catalysed reaction is D-serine = pyruvate + NH4(+). This is D-serine dehydratase from Photorhabdus laumondii subsp. laumondii (strain DSM 15139 / CIP 105565 / TT01) (Photorhabdus luminescens subsp. laumondii).